The chain runs to 345 residues: N-glycosylase/DNA lyase (345 aa).

Residues N149, R154, and R204 each coordinate DNA. K249 functions as the Schiff-base intermediate with DNA in the catalytic mechanism. The 8-oxoguanine site is built by P266 and D268. Residues H270 and Q287 each contribute to the DNA site. Residues Q315 and F319 each coordinate 8-oxoguanine.

Belongs to the type-1 OGG1 family. As to expression, highest expression in testis.

It is found in the nucleus. The protein resides in the nucleoplasm. Its subcellular location is the nucleus speckle. The protein localises to the nucleus matrix. The catalysed reaction is 2'-deoxyribonucleotide-(2'-deoxyribose 5'-phosphate)-2'-deoxyribonucleotide-DNA = a 3'-end 2'-deoxyribonucleotide-(2,3-dehydro-2,3-deoxyribose 5'-phosphate)-DNA + a 5'-end 5'-phospho-2'-deoxyribonucleoside-DNA + H(+). DNA repair enzyme that incises DNA at 8-oxoG residues. Excises 7,8-dihydro-8-oxoguanine and 2,6-diamino-4-hydroxy-5-N-methylformamidopyrimidine (FAPY) from damaged DNA. Has a beta-lyase activity that nicks DNA 3' to the lesion. This Mus musculus (Mouse) protein is N-glycosylase/DNA lyase (Ogg1).